Reading from the N-terminus, the 260-residue chain is Thiamine thiazole synthase (260 aa).

Residues alanine 36, 55–56 (EQ), glycine 63, and 154–156 (HVD) contribute to the NAD(+) site. Fe cation-binding residues include aspartate 156 and histidine 171. Methionine 224 serves as a coordination point for NAD(+). Arginine 234 is a glycine binding site.

The protein belongs to the THI4 family. In terms of assembly, homooctamer; tetramer of dimers. Requires Fe(2+) as cofactor.

It carries out the reaction hydrogen sulfide + glycine + NAD(+) = ADP-5-ethyl-4-methylthiazole-2-carboxylate + nicotinamide + 3 H2O + H(+). It functions in the pathway cofactor biosynthesis; thiamine diphosphate biosynthesis. Functionally, involved in the biosynthesis of the thiazole moiety of thiamine. Catalyzes the conversion of NAD and glycine to adenosine diphosphate 5-(2-hydroxyethyl)-4-methylthiazole-2-carboxylate (ADT), an adenylated thiazole intermediate, using free sulfide as a source of sulfur. The sequence is that of Thiamine thiazole synthase from Methanosarcina barkeri (strain Fusaro / DSM 804).